Here is a 395-residue protein sequence, read N- to C-terminus: Phosphoglycerate kinase (395 aa).

Substrate contacts are provided by residues 21 to 23 (DFN), R36, 59 to 62 (HLGR), R120, and R153. ATP-binding positions include K203, E325, and 351-354 (GGDS).

The protein belongs to the phosphoglycerate kinase family. Monomer.

It localises to the cytoplasm. The enzyme catalyses (2R)-3-phosphoglycerate + ATP = (2R)-3-phospho-glyceroyl phosphate + ADP. It participates in carbohydrate degradation; glycolysis; pyruvate from D-glyceraldehyde 3-phosphate: step 2/5. This chain is Phosphoglycerate kinase, found in Roseiflexus castenholzii (strain DSM 13941 / HLO8).